The chain runs to 575 residues: Envelope glycoprotein (575 aa).

An N-terminal signal peptide occupies residues M1–G19. The Extracellular portion of the chain corresponds to G20–Y517. N-linked (GlcNAc...) asparagine; by host glycosylation is found at N126 and N239. The CXXC signature appears at C249–C252. Intrachain disulfides connect C249-C252, C249-C475, and C467-C474. N266, N271, N302, N316, N322, and N349 each carry an N-linked (GlcNAc...) asparagine; by host glycan. Residues L390 to L410 form a fusion peptide region. Coiled coils occupy residues G411 to A461 and Q471 to F507. An immunosuppression region spans residues L450–I466. The CX6CC signature appears at C467–C475. Residue N479 is glycosylated (N-linked (GlcNAc...) asparagine; by host). A helical transmembrane segment spans residues L518–I538. Residues L539–L575 are Cytoplasmic-facing. The short motif at Y562–L565 is the YXXL motif; contains endocytosis signal element.

As to quaternary structure, the mature envelope protein (Env) consists of a trimer of SU-TM heterodimers attached by a labile interchain disulfide bond. Specific enzymatic cleavages in vivo yield mature proteins. Envelope glycoproteins are synthesized as an inactive precursor that is N-glycosylated and processed likely by host cell furin or by a furin-like protease in the Golgi to yield the mature SU and TM proteins. The cleavage site between SU and TM requires the minimal sequence [KR]-X-[KR]-R. Post-translationally, the CXXC motif is highly conserved across a broad range of retroviral envelope proteins. It is thought to participate in the formation of a labile disulfide bond possibly with the CX6CC motif present in the transmembrane protein. Isomerization of the intersubunit disulfide bond to an SU intrachain disulfide bond is thought to occur upon receptor recognition in order to allow membrane fusion.

It localises to the virion membrane. The protein localises to the host cell membrane. In terms of biological role, the surface protein (SU) attaches the virus to the host cell by binding to its receptor. This interaction triggers the refolding of the transmembrane protein (TM) and is thought to activate its fusogenic potential by unmasking its fusion peptide. Fusion occurs at the host cell plasma membrane. The transmembrane protein (TM) acts as a class I viral fusion protein. Under the current model, the protein has at least 3 conformational states: pre-fusion native state, pre-hairpin intermediate state, and post-fusion hairpin state. During viral and target cell membrane fusion, the coiled coil regions (heptad repeats) assume a trimer-of-hairpins structure, positioning the fusion peptide in close proximity to the C-terminal region of the ectodomain. The formation of this structure appears to drive apposition and subsequent fusion of viral and target cell membranes. Membranes fusion leads to delivery of the nucleocapsid into the cytoplasm. The polypeptide is Envelope glycoprotein (env) (Squirrel monkey retrovirus (SMRV-H)).